The sequence spans 79 residues: D-alanyl carrier protein (79 aa).

The region spanning 1 to 77 (MDTKQGVLDI…KIVAKVESLE (77 aa)) is the Carrier domain. Residue serine 35 is modified to O-(pantetheine 4'-phosphoryl)serine.

It belongs to the DltC family. Post-translationally, 4'-phosphopantetheine is transferred from CoA to a specific serine of apo-DCP.

Its subcellular location is the cytoplasm. It functions in the pathway cell wall biogenesis; lipoteichoic acid biosynthesis. Carrier protein involved in the D-alanylation of lipoteichoic acid (LTA). The loading of thioester-linked D-alanine onto DltC is catalyzed by D-alanine--D-alanyl carrier protein ligase DltA. The DltC-carried D-alanyl group is further transferred to cell membrane phosphatidylglycerol (PG) by forming an ester bond, probably catalyzed by DltD. D-alanylation of LTA plays an important role in modulating the properties of the cell wall in Gram-positive bacteria, influencing the net charge of the cell wall. This is D-alanyl carrier protein from Lactobacillus acidophilus (strain ATCC 700396 / NCK56 / N2 / NCFM).